The chain runs to 340 residues: Protein RecA (340 aa).

Position 65-72 (65-72 (GPESGGKT)) interacts with ATP.

This sequence belongs to the RecA family.

The protein localises to the cytoplasm. Functionally, can catalyze the hydrolysis of ATP in the presence of single-stranded DNA, the ATP-dependent uptake of single-stranded DNA by duplex DNA, and the ATP-dependent hybridization of homologous single-stranded DNAs. It interacts with LexA causing its activation and leading to its autocatalytic cleavage. The chain is Protein RecA from Thermus thermophilus (strain ATCC 27634 / DSM 579 / HB8).